The chain runs to 716 residues: MDQLSYQSRLIPPEEAQQTGCFTSLPIRIHPRNDIADAATAKFIADWAKHVGDGREKRTHFCPSRVGNWNSLLYPEGLPERLGSVSYLLDLGLIHDDVNEELSVQDAMAAHERLRPALDPQDNRKWDPESPQMKFKMLLSECVIECIKTDRELGTAMLKSFRVLWLDIAENATSDAPQTMDDYWDVRMTNGGMSVFWPMVLYATNLRLSEEQHTLVQPIIAAAEEALCWANDYFSYEREVWELETGKAKRIVNIVEMVSRTKGLSSAEAKAEVKRMILGAEAKYCRLRDDLLSSNPEMSMDLKRWIEYIGLSISGNHYWLSACSRQNTWKTNCSIDGKINGLTNGSVNDTNNRSVDGVVNGTVDTGIEEPSTGNKDTSLKALKLLFNSTPNESHPVCRYPNDKLSDYAMVAPMTHISSLPSKGTRSELISALNVWLKVPPVVLGHISSAIDMLHNASLILDDIQDNSPLRRGVPAAHVVFGTAQSINSATFMFVKATEAVRSTLSPAALEALLRGLQTLFMGQSWDLYWKHNLQCPAEGDYIRMVDHKTGGMFVMLVQLMAAESPYYGASVIEDLERLMRLLGRFYQIRDDYMNFSAYSAQKGFAEDLDEGKFSFPVVCGFERDPELRGQILAIFRQRPTSGAGEATQLSRKVKEHLIRCIAASGGFDETLKCLRSLENELDTEIAELEKKLGQVNPLLRLCLATLSMEGCEKICW.

A sesterterpenoid synthase region spans residues 4–328 (LSYQSRLIPP…WLSACSRQNT (325 aa)). Asp96 provides a ligand contact to Mg(2+). Residue Asp96 coordinates substrate. Residues 187–190 (RMTN) are substrate. Asn231 contacts substrate. A substrate region spans residues 235–239 (SYERE). Residues 329–711 (WKTNCSIDGK…CLATLSMEGC (383 aa)) form a geranylfarnesyl diphosphate synthase region. Isopentenyl diphosphate contacts are provided by Lys422, Arg425, and His454. Residues Asp461 and Asp465 each contribute to the Mg(2+) site. Arg470 serves as a coordination point for dimethylallyl diphosphate. Arg471 serves as a coordination point for isopentenyl diphosphate. Residues Lys548, Thr549, Gln587, Asn594, and Lys602 each contribute to the dimethylallyl diphosphate site.

This sequence in the N-terminal section; belongs to the terpene synthase family. The protein in the C-terminal section; belongs to the FPP/GGPP synthase family.

The enzyme catalyses 4 isopentenyl diphosphate + dimethylallyl diphosphate = (2E,6E,10E,14E)-geranylfarnesyl diphosphate + 4 diphosphate. It catalyses the reaction (2E,6E,10E,14E)-geranylfarnesyl diphosphate = fusoxypene A + diphosphate. The catalysed reaction is (2E,6E,10E,14E)-geranylfarnesyl diphosphate = fusoxypene B + diphosphate. It carries out the reaction (2E,6E,10E,14E)-geranylfarnesyl diphosphate = fusoxypene C + diphosphate. The enzyme catalyses (2E,6E,10E,14E)-geranylfarnesyl diphosphate = (-)-astellatene + diphosphate. Functionally, bifunctional sesterterpenoid synthase that performs both prenyl transferase and terpene cyclase activity, converting isopentenyl diphosphate and dimethylallyl diphosphate into geranylfarnesyl diphosphate (GFPP) and then converting GFPP into the enantiomeric sesterterpenes with a 5-6-7-3-5 ring system fusoxypene A, fusoxypene B, fusoxypene C and (-)-astellatene. The protein is Fusoxypene synthase of Fusarium oxysporum (Fusarium vascular wilt).